A 158-amino-acid chain; its full sequence is Flagellar assembly factor FliW (158 aa).

Belongs to the FliW family. Interacts with translational regulator CsrA and flagellin(s).

The protein localises to the cytoplasm. Acts as an anti-CsrA protein, binds CsrA and prevents it from repressing translation of its target genes, one of which is flagellin. Binds to flagellin and participates in the assembly of the flagellum. This is Flagellar assembly factor FliW from Syntrophus aciditrophicus (strain SB).